A 172-amino-acid chain; its full sequence is L-methionine sulfoximine/L-methionine sulfone acetyltransferase (172 aa).

Positions 3-166 (ASIRDAGVAD…DLTFMQLNLD (164 aa)) constitute an N-acetyltransferase domain. Substrate is bound by residues 75-77 (RPF) and 85-87 (EHS). Acetyl-CoA is bound by residues 88–90 (VYV), 96–101 (GKGLGV), and Asn-127.

As to quaternary structure, homodimer.

The enzyme catalyses L-methionine sulfoximine + acetyl-CoA = N-acetyl-L-methionine sulfoximine + CoA + H(+). It catalyses the reaction L-methionine sulfone + acetyl-CoA = N-acetyl-L-methionine sulfone + CoA + H(+). Plays a role in the resistance against the toxic effects of L-methionine sulfoximine (MSX), a rare amino acid, which inhibits glutamine synthetase (GlnA). Catalyzes the acetylation of L-methionine sulfoximine (MSX). The chain is L-methionine sulfoximine/L-methionine sulfone acetyltransferase from Pseudomonas aeruginosa (strain ATCC 15692 / DSM 22644 / CIP 104116 / JCM 14847 / LMG 12228 / 1C / PRS 101 / PAO1).